The primary structure comprises 355 residues: RGG repeats nuclear RNA binding protein A (355 aa).

Ala2 bears the N-acetylalanine mark. The disordered stretch occupies residues 26–225 (KIDKSKKSGQ…VEEKEPEDKE (200 aa)). Low complexity predominate over residues 37–47 (SSLPAKSAPKL). Composition is skewed to gly residues over residues 67–81 (RGGGGRGGFNRGRGG) and 114–141 (GGGAPRGSFRGEGGGPGGGRRGGFSNEG). Residues 132-139 (GRRGGFSN) carry the Nuclear localization signal motif. The span at 143–168 (DGERPRRAFERRSGTGRGSDFKRDGS) shows a compositional bias: basic and acidic residues. The Arginine-rich RNA-binding motif E-R-P-R-R-X-[F/Y]-[E/D]-R-R-S motif lies at 145-155 (ERPRRAFERRS). The segment covering 177–190 (GEEIAAETEAVAGV) has biased composition (low complexity). Composition is skewed to basic and acidic residues over residues 191–202 (ETEKDVGEKPAV) and 209–225 (ANKEDTVVEEKEPEDKE). The 56-residue stretch at 234-289 (ILEEKKKALQSLTTSERKVDTKVFESMQQLSNKKSNDEIFIKLGSDKDKRKDDKEE) folds into the FF domain. Ser268 bears the Phosphoserine mark. The segment covering 277–292 (GSDKDKRKDDKEEKAK) has biased composition (basic and acidic residues). The tract at residues 277 to 355 (GSDKDKRKDD…AAQFPSLGGK (79 aa)) is disordered. Gly residues predominate over residues 323–333 (GRGGVSSGESG). Ser351 bears the Phosphoserine mark.

This sequence belongs to the SERBP1-HABP4 family. Expressed in seedlings, leaves, roots, inflorescences, and siliques. Constitutively expressed in seedlings and roots.

It is found in the cytoplasm. It localises to the perinuclear region. The protein resides in the nucleus. In terms of biological role, ribosome-binding protein that acts as a regulator of mRNA translation by promoting ribosome inactivation. Binds RNA. Regulates responses to abscisic acid (ABA). Promotes stomata closure in drought conditions. Involved in resistance to salt and drought stresses via the accumulation of Pro. The sequence is that of RGG repeats nuclear RNA binding protein A from Arabidopsis thaliana (Mouse-ear cress).